A 131-amino-acid chain; its full sequence is Small ribosomal subunit protein bS16 (131 aa).

Residues 87 to 117 (IGKSKQEELRKSEAKTSAKNKKANEEKANEE) are compositionally biased toward basic and acidic residues. The tract at residues 87–131 (IGKSKQEELRKSEAKTSAKNKKANEEKANEEKVEESETLEASSEA) is disordered.

This sequence belongs to the bacterial ribosomal protein bS16 family.

The polypeptide is Small ribosomal subunit protein bS16 (Prochlorococcus marinus (strain SARG / CCMP1375 / SS120)).